The following is a 637-amino-acid chain: Chaperone protein dnaK2 (637 aa).

Thr197 carries the phosphothreonine; by autocatalysis modification. Residues 602-637 (AAAGGAAPGGDAGASAASGGGDASDDVIDAEFTETK) are disordered. Positions 603–623 (AAGGAAPGGDAGASAASGGGD) are enriched in gly residues. Acidic residues predominate over residues 624–637 (ASDDVIDAEFTETK).

Belongs to the heat shock protein 70 family.

Functionally, acts as a chaperone. In Parasynechococcus marenigrum (strain WH8102), this protein is Chaperone protein dnaK2 (dnaK2).